The following is a 1035-amino-acid chain: Potassium-transporting ATPase alpha chain 1 (1035 aa).

Positions 1–41 (MGKADNYELYSVELGPGPGGDMAAKMSKKKKAGGGGGKRKE) are disordered. Over 1–98 (MGKADNYELY…NALRPPRGTP (98 aa)) the chain is Cytoplasmic. 2 positions are modified to phosphotyrosine: Tyr7 and Tyr10. Over residues 26–40 (MSKKKKAGGGGGKRK) the composition is skewed to basic residues. Ser27 carries the phosphoserine modification. A helical membrane pass occupies residues 99–119 (EYVKFARQLAGGLQCLMWVAA). Residues 120-142 (AICLIAFAIQASEGDLTTDDNLY) are Lumenal-facing. Residues 143–163 (LALALIAVVVVTGCFGYYQEF) traverse the membrane as a helical segment. Residues 164–299 (KSTNIIASFK…NEKTPIAIEI (136 aa)) are Cytoplasmic-facing. The helical transmembrane segment at 300–319 (EHFVDIIAGLAILFGATFFV) threads the bilayer. Residues 320-331 (VAMCIGYTFLRA) lie on the Lumenal side of the membrane. Residues 332–349 (MVFFMAIVVAYVPEGLLA) form a helical membrane-spanning segment. The K(+) site is built by Val340, Ala341, Val343, and Glu345. Residues 350–783 (TVTVCLSLTA…EQGRLIFDNL (434 aa)) lie on the Cytoplasmic side of the membrane. Residue Asp387 is the 4-aspartylphosphate intermediate of the active site. Mg(2+) contacts are provided by Asp387 and Thr389. Ser463 and Ser601 each carry phosphoserine. Residues Asp728 and Asp732 each coordinate Mg(2+). Residues 784–803 (KKSIAYTLTKNIPELTPYLI) form a helical membrane-spanning segment. Residue Glu797 coordinates K(+). Over 804 to 813 (YITVSVPLPL) the chain is Lumenal. A helical membrane pass occupies residues 814 to 834 (GCITILFIELCTDIFPSVSLA). K(+) is bound at residue Glu822. Over 835-854 (YEKAESDIMHLRPRNPKRDR) the chain is Cytoplasmic. Phosphoserine is present on Ser840. Residues 855–877 (LVNEPLAAYSYFQIGAIQSFAGF) traverse the membrane as a helical segment. Residues 878-929 (TDYFTAMAQEGWFPLLCVGLRPQWEDHHLQDLQDSYGQEWTFGQRLYQQYTC) are Lumenal-facing. Residues 930–949 (YTVFFISIEMCQIADVLIRK) form a helical membrane-spanning segment. Topologically, residues 950-963 (TRRLSAFQQGFFRN) are cytoplasmic. Ser954 is modified (phosphoserine; by PKA). The helical transmembrane segment at 964 to 982 (RILVIAIVFQVCIGCFLCY) threads the bilayer. The Lumenal segment spans residues 983-997 (CPGMPNIFNFMPIRF). A helical membrane pass occupies residues 998-1018 (QWWLVPMPFGLLIFVYDEIRK). Topologically, residues 1019–1035 (LGVRCCPGSWWDQELYY) are cytoplasmic.

Belongs to the cation transport ATPase (P-type) (TC 3.A.3) family. Type IIC subfamily. The gastric H(+)/K(+) ATPase pump is composed of the catalytic alpha subunit ATP4A and the regulatory beta subunit ATP4B. Interacts (via the P-domain) with ATP4B (via N-terminus); this interaction stabilizes the lumenal-open E2 conformation state and prevents the reverse reaction of the transport cycle.

Its subcellular location is the apical cell membrane. It localises to the cell membrane. It catalyses the reaction K(+)(out) + ATP + H2O + H(+)(in) = K(+)(in) + ADP + phosphate + 2 H(+)(out). The catalytic subunit of the gastric H(+)/K(+) ATPase pump which transports H(+) ions in exchange for K(+) ions across the apical membrane of parietal cells. Uses ATP as an energy source to pump H(+) ions to the gastric lumen while transporting K(+) ion from the lumen into the cell. Remarkably generates a million-fold proton gradient across the gastric parietal cell membrane, acidifying the gastric juice down to pH 1. Within a transport cycle, the transfer of a H(+) ion across the membrane is coupled to ATP hydrolysis and is associated with a transient phosphorylation that shifts the pump conformation from inward-facing (E1) to outward-facing state (E2). The release of the H(+) ion in the stomach lumen is followed by binding of K(+) ion converting the pump conformation back to the E1 state. The protein is Potassium-transporting ATPase alpha chain 1 (ATP4A) of Oryctolagus cuniculus (Rabbit).